The primary structure comprises 155 residues: uncharacterized protein (155 aa).

A helical membrane pass occupies residues 5–25 (GIIICVGIAFLIFIFLWAYFK).

It is found in the membrane. This is an uncharacterized protein from Acheta domesticus (House cricket).